The sequence spans 287 residues: Toxin zeta (287 aa).

40-47 (GQPGSGKT) is a binding site for ATP. The tract at residues 250 to 287 (MVQNQHQETPEFKAIQQKMESLQPPTPPIPKTPKLPGI) is disordered. The span at 273-287 (PPTPPIPKTPKLPGI) shows a compositional bias: pro residues.

It belongs to the zeta toxin family. In terms of assembly, in the presence of the epsilon antitoxin, forms an inactive PezA(2)PezT(2) heterotetramer.

It carries out the reaction UDP-N-acetyl-alpha-D-glucosamine + ATP = UDP-N-acetyl-alpha-D-glucosamine 3'-phosphate + ADP + H(+). In terms of biological role, toxic component of a type II toxin-antitoxin (TA) system. Phosphorylates UDP-N-acetyl-D-glucosamine (UNAG) on the 3'-hydroxyl group of the N-acetyl-D-glucosamine moiety, yielding UNAG-3P. UNAG-3P inhibits MurA, the first committed step in cell wall synthesis, which is then blocked. Phosphorylation is inhibited by cognate epsilon antitoxin. Part of a postsegregational killing (PSK) system involved in the killing of plasmid-free cells. The zeta toxin induces programmed cell death. This Streptococcus agalactiae protein is Toxin zeta.